The sequence spans 512 residues: Protein arginine N-methyltransferase 2 (512 aa).

The interval 67–103 (TSNIDDLPLPPPIQEVEEEEPTQQNIEQQQQTQDESD) is disordered. Over residues 88 to 99 (TQQNIEQQQQTQ) the composition is skewed to low complexity. Positions 120–508 (DEEYFSSYSK…KTNPFDYSYQ (389 aa)) constitute an SAM-dependent MTase PRMT-type domain. Residues H133, R142, G166, and E217 each coordinate S-adenosyl-L-methionine. Active-site residues include E231 and E240. The disordered stretch occupies residues 375–395 (DDDDNDNNNNNNDNSNDDENK).

It belongs to the class I-like SAM-binding methyltransferase superfamily. Protein arginine N-methyltransferase family.

Its subcellular location is the cytoplasm. It localises to the nucleus. The enzyme catalyses L-arginyl-[protein] + 2 S-adenosyl-L-methionine = N(omega),N(omega)-dimethyl-L-arginyl-[protein] + 2 S-adenosyl-L-homocysteine + 2 H(+). Arginine methyltransferase that methylates the guanidino nitrogens of arginyl residues in some proteins such as histones. The sequence is that of Protein arginine N-methyltransferase 2 (prmt2) from Dictyostelium discoideum (Social amoeba).